The primary structure comprises 545 residues: MAQLAGQPVVILPEGTQRYVGRDAQRLNILAARIVAETIRTTLGPKGMDKMLVDSLGDIVITNDGATILDEMDIQHPAAKMMVEVAKTQDKEAGDGTTTAVVIAGELLKKAEELLDQNIHPSIIIKGYALAAEKAQEILEGIAKEVSPDDVETLKKAAVTSITGKAAEEEREYLAEIAVEAVRQVAEKVGDKYKVDLDNIKFEKKEGASVHETQLIRGVVIDKEVVHPGMPKRVENAKIALINDALEVKETETDAEIRITSPEQLQAFLEQEERMLREMVDKIKEVGANVVFVQKGIDDLAQHYLAKYGIMAVRRVKKSDMEKLAKATGAKIVTNVRDLTPEDLGEAELVEQRKVAGENMIFVEGCKNPKAVTILIRGGTEHVVDEVERALEDAVKVVKDIVEDGKILPAGGAPEIELAIKLDEYAKEVGGKEQLAIEAFAEALKVIPRTLAENAGLDPVETLVKVIAAHKEKGPTIGVDVFEGEPADMMEKGVIAPLRVPKQAIKSASEAAIMILRIDDVIAASKLEKDKEDKGGSNDFGSDLD.

Belongs to the TCP-1 chaperonin family. In terms of assembly, forms an oligomeric complex of eight-membered rings.

Functionally, molecular chaperone; binds unfolded polypeptides in vitro, and has a weak ATPase activity. This is Thermosome subunit (ths) from Desulfurococcus sp. (strain SY).